Reading from the N-terminus, the 323-residue chain is MAADPTTGGGEAESFFRAAPPLRDQDRVAGDLADFVARHSGSGGGGRLAGVVCVTSGGTTVPLEQRCVRYIDNFSSGQRGAASTEYFLKAGYAVIFIYRRGSKQPYCRFLPEDSFLDLFELGEESDIQVPESHAAVVKTAIRNYRKAIDEGLLLKLPFTTIFEYLQLLQMVGTAMNCLGRQGMFYLAAAVSDFYVPWESMAKHKIESASGPLNMQLNQVPKMLFILRKQWAPSAFCVSFKLETDPDILLQKAEAALRKYGMNVVVANELANYKDVVVMVTSNGRTTVRRPSKEDDVEEQLIDLLVEMHSEHIMQLNQDVHKLT.

It belongs to the PPC synthetase family. In terms of assembly, homodimer.

The enzyme catalyses (R)-4'-phosphopantothenate + L-cysteine + CTP = N-[(R)-4-phosphopantothenoyl]-L-cysteine + CMP + diphosphate + H(+). It participates in cofactor biosynthesis; coenzyme A biosynthesis; CoA from (R)-pantothenate: step 2/5. Functionally, catalyzes the first step in the biosynthesis of coenzyme A from vitamin B5, where cysteine is conjugated to 4'-phosphopantothenate to form 4-phosphopantothenoylcysteine. This chain is Phosphopantothenate--cysteine ligase 2, found in Oryza sativa subsp. japonica (Rice).